The primary structure comprises 667 residues: Bifunctional polymyxin resistance protein ArnA (667 aa).

Residues 1-304 (MKAIVFAYHD…EMGIVTDVRL (304 aa)) are formyltransferase ArnAFT. Catalysis depends on histidine 104, which acts as the Proton donor; for formyltransferase activity. (6R)-10-formyltetrahydrofolate-binding positions include arginine 114 and 136 to 140 (VKKAD). A dehydrogenase ArnADH region spans residues 314–667 (RRTRVLILGV…TAAPKDELNA (354 aa)). Residues aspartate 347 and 368-369 (DI) each bind NAD(+). UDP-alpha-D-glucuronate-binding positions include alanine 393, tyrosine 398, and 432–433 (TS). The active-site Proton acceptor; for decarboxylase activity is the glutamate 434. Residues arginine 460, asparagine 492, 526–535 (KLVDGGAQKR), and tyrosine 613 each bind UDP-alpha-D-glucuronate. Arginine 619 acts as the Proton donor; for decarboxylase activity in catalysis.

The protein in the N-terminal section; belongs to the Fmt family. UDP-L-Ara4N formyltransferase subfamily. In the C-terminal section; belongs to the NAD(P)-dependent epimerase/dehydratase family. UDP-glucuronic acid decarboxylase subfamily. In terms of assembly, homohexamer, formed by a dimer of trimers.

The enzyme catalyses UDP-alpha-D-glucuronate + NAD(+) = UDP-beta-L-threo-pentopyranos-4-ulose + CO2 + NADH. It carries out the reaction UDP-4-amino-4-deoxy-beta-L-arabinose + (6R)-10-formyltetrahydrofolate = UDP-4-deoxy-4-formamido-beta-L-arabinose + (6S)-5,6,7,8-tetrahydrofolate + H(+). It participates in nucleotide-sugar biosynthesis; UDP-4-deoxy-4-formamido-beta-L-arabinose biosynthesis; UDP-4-deoxy-4-formamido-beta-L-arabinose from UDP-alpha-D-glucuronate: step 1/3. Its pathway is nucleotide-sugar biosynthesis; UDP-4-deoxy-4-formamido-beta-L-arabinose biosynthesis; UDP-4-deoxy-4-formamido-beta-L-arabinose from UDP-alpha-D-glucuronate: step 3/3. The protein operates within bacterial outer membrane biogenesis; lipopolysaccharide biosynthesis. Functionally, bifunctional enzyme that catalyzes the oxidative decarboxylation of UDP-glucuronic acid (UDP-GlcUA) to UDP-4-keto-arabinose (UDP-Ara4O) and the addition of a formyl group to UDP-4-amino-4-deoxy-L-arabinose (UDP-L-Ara4N) to form UDP-L-4-formamido-arabinose (UDP-L-Ara4FN). The modified arabinose is attached to lipid A and is required for resistance to polymyxin and cationic antimicrobial peptides. The sequence is that of Bifunctional polymyxin resistance protein ArnA from Yersinia pseudotuberculosis serotype IB (strain PB1/+).